A 343-amino-acid polypeptide reads, in one-letter code: Probable dual-specificity RNA methyltransferase RlmN (343 aa).

The active-site Proton acceptor is Glu-91. The Radical SAM core domain occupies 97–326; that stretch reads HPDRITACIS…AEIRREKGTD (230 aa). Cys-104 and Cys-331 are oxidised to a cystine. Residues Cys-111, Cys-115, and Cys-118 each coordinate [4Fe-4S] cluster. S-adenosyl-L-methionine is bound by residues 158-159, Ser-190, 213-215, and Asn-289; these read GE and SLH. Residue Cys-331 is the S-methylcysteine intermediate of the active site.

The protein belongs to the radical SAM superfamily. RlmN family. [4Fe-4S] cluster is required as a cofactor.

The protein resides in the cytoplasm. It catalyses the reaction adenosine(2503) in 23S rRNA + 2 reduced [2Fe-2S]-[ferredoxin] + 2 S-adenosyl-L-methionine = 2-methyladenosine(2503) in 23S rRNA + 5'-deoxyadenosine + L-methionine + 2 oxidized [2Fe-2S]-[ferredoxin] + S-adenosyl-L-homocysteine. It carries out the reaction adenosine(37) in tRNA + 2 reduced [2Fe-2S]-[ferredoxin] + 2 S-adenosyl-L-methionine = 2-methyladenosine(37) in tRNA + 5'-deoxyadenosine + L-methionine + 2 oxidized [2Fe-2S]-[ferredoxin] + S-adenosyl-L-homocysteine. Functionally, specifically methylates position 2 of adenine 2503 in 23S rRNA and position 2 of adenine 37 in tRNAs. The protein is Probable dual-specificity RNA methyltransferase RlmN of Thermotoga maritima (strain ATCC 43589 / DSM 3109 / JCM 10099 / NBRC 100826 / MSB8).